The following is a 398-amino-acid chain: GTPase Obg (398 aa).

One can recognise an Obg domain in the interval 1–159 (MKFVDEAPIS…RNLKLELKVL (159 aa)). Positions 128-148 (TRFKSSTNRVPRKTTPGTEGE) are disordered. Positions 160–333 (ADVGMLGLPN…LSGKIMDHLE (174 aa)) constitute an OBG-type G domain. Residues 166–173 (GLPNAGKS), 191–195 (FTTLV), 213–216 (DIPG), 283–286 (NKID), and 314–316 (SAL) each bind GTP. S173 and T193 together coordinate Mg(2+).

This sequence belongs to the TRAFAC class OBG-HflX-like GTPase superfamily. OBG GTPase family. As to quaternary structure, monomer. Requires Mg(2+) as cofactor.

It is found in the cytoplasm. Its function is as follows. An essential GTPase which binds GTP, GDP and possibly (p)ppGpp with moderate affinity, with high nucleotide exchange rates and a fairly low GTP hydrolysis rate. Plays a role in control of the cell cycle, stress response, ribosome biogenesis and in those bacteria that undergo differentiation, in morphogenesis control. The chain is GTPase Obg from Cellvibrio japonicus (strain Ueda107) (Pseudomonas fluorescens subsp. cellulosa).